The chain runs to 711 residues: Ribosomal RNA large subunit methyltransferase K/L (711 aa).

The THUMP domain occupies 43–154; the sequence is TLYRTLLWSR…RENLVISLDL (112 aa).

This sequence belongs to the methyltransferase superfamily. RlmKL family.

The protein localises to the cytoplasm. The catalysed reaction is guanosine(2445) in 23S rRNA + S-adenosyl-L-methionine = N(2)-methylguanosine(2445) in 23S rRNA + S-adenosyl-L-homocysteine + H(+). It catalyses the reaction guanosine(2069) in 23S rRNA + S-adenosyl-L-methionine = N(2)-methylguanosine(2069) in 23S rRNA + S-adenosyl-L-homocysteine + H(+). Its function is as follows. Specifically methylates the guanine in position 2445 (m2G2445) and the guanine in position 2069 (m7G2069) of 23S rRNA. This is Ribosomal RNA large subunit methyltransferase K/L from Haemophilus influenzae (strain 86-028NP).